A 972-amino-acid chain; its full sequence is MPSNHNTSVPKFSSFNSVKAKKNPITKSNKKYRSSHDQVSSNHAKSSFPSHRSIQSNFAVDTKGEKQNLLYGINKRPVPKYHRSSSSVYGSAPLLRIVKESKEGITLNKKKSLEIKYDEERSFDEKENDESEFEDGQQGFIPLLVNRNSDPSEKSTFSLNILKAIKETDEEIKKNPGKARLWIKMCEYQERLLFDEFRRSNSDDIKGKLKIENNSRSVKLSILEKALKEVKGCDHEILVSYYLQLGSEEWSKEETNQKFEEVLIEHPGYLNLWMKYAEYFTGISEFTFNDCLNMFSKCFKFLKQKLSDRKSCKERESTDVTSNFEVEEAILHLLIRLCDFLKNCGYYELAWSIFQANMELCYFYPRYLEKKLDSTFFESFSKFWNSDTPKFSEENARGWCNVLDDESSQQNQNFSSEIGIFQTVKLWYLNESKFDTNPPPRSTMSCRKLSGIDDPFRYIVFNDIQDFIVCFESETIAFAFKYKFFAFCGVPLFPPGISTNSWFASYDKGIYNLLFGMASSESFINGQIAEKNSFQFPCSILPSYIDLFISLMSFKNLNFKLFDYNLAHHVKESMERAFHQLVFSADDEYLASVYLIYLKQMETKNLSEEKPQVNKIVKKILKKYDSSVSVWNTYAQLEHLSGAFTMAETIFKTIFQIHASQLRYIDNLNVYKNWAFRKLLINDTEGCLVIIKCLLFPGDKSLTSDNNRASEMLFGMLENCASKEELLYVCLIYTIWTHCTDMDSMDNCVYLCIQKFESYGWGASSEMECYFSYCSLIFYYQATTLQFYNLPKVRPFFEKGVTLFSANTAIWEVYIFFESKLRQENKPKIRAMKILKSASNAVVTACWYLFYVAVQQIEPTNSQYFLRTLDITLNNEKLKSVAKFWRIYLKILNLRLNGTEWVSAITTKALASCPCNKGVCMDVIDLLLKKEMESRAIICYIIMLEKGFRVHNEIRRDVLKFERGDELILSPN.

A compositionally biased stretch (polar residues) spans 1-17 (MPSNHNTSVPKFSSFNS). Residues 1–61 (MPSNHNTSVP…RSIQSNFAVD (61 aa)) are disordered. Residues 19–33 (KAKKNPITKSNKKYR) show a composition bias toward basic residues. A compositionally biased stretch (polar residues) spans 37 to 59 (DQVSSNHAKSSFPSHRSIQSNFA). HAT repeat units follow at residues 159-191 (LNIL…YQER), 250-282 (WSKE…YFTG), 318-350 (TDVT…YELA), 355-386 (QANM…FWNS), 608-640 (EEKP…LEHL), 788-820 (YNLP…FESK), and 860-894 (TNSQ…ILNL). Residue Ser970 is modified to Phosphoserine.

The protein belongs to the NRDE2 family.

It is found in the nucleus. The protein is Protein NRDE2 homolog of Schizosaccharomyces pombe (strain 972 / ATCC 24843) (Fission yeast).